The primary structure comprises 346 residues: MSDNKTSLSYKDAGVDIDAGNALVDRIKGVVKRTRRPEVMGGIGGFGALCELPTKYKQPLLVSGTDGVGTKLRLALDLNKHDTIGIDLVAMCVNDLIVQGAEPLFFLDYYATGKLDVDVAAEVVTGIGEGCIQAGCALIGGETAEMPGMYEGEDYDVAGFCVGVVEKEDVIDGTKVAAGDALIAVGSSGPHSNGYSLIRKILEVSNADLNEELNGKTIAAHLIEPTKIYIKSALKMIAEHDIHAISHITGGGFWENIPRVLPQGTKAVVDGSSWEWPAIFNWLQEKGNVDTYEMYRTFNCGVGLVVALPKEQAEQAVALLNAEGENAWVIGEIAAAEQGEEQVEIR.

It belongs to the AIR synthase family.

It localises to the cytoplasm. The catalysed reaction is 2-formamido-N(1)-(5-O-phospho-beta-D-ribosyl)acetamidine + ATP = 5-amino-1-(5-phospho-beta-D-ribosyl)imidazole + ADP + phosphate + H(+). Its pathway is purine metabolism; IMP biosynthesis via de novo pathway; 5-amino-1-(5-phospho-D-ribosyl)imidazole from N(2)-formyl-N(1)-(5-phospho-D-ribosyl)glycinamide: step 2/2. The protein is Phosphoribosylformylglycinamidine cyclo-ligase of Aliivibrio fischeri (strain ATCC 700601 / ES114) (Vibrio fischeri).